The sequence spans 505 residues: Probable folylpolyglutamate synthase (505 aa).

89–92 is a binding site for ATP; the sequence is GKGS. Mg(2+) is bound by residues Ser-121, Glu-190, and His-218. ATP-binding residues include Arg-332 and Asp-346.

The protein belongs to the folylpolyglutamate synthase family. A monovalent cation serves as cofactor.

It localises to the mitochondrion inner membrane. The protein resides in the mitochondrion matrix. Its subcellular location is the cytoplasm. The catalysed reaction is (6S)-5,6,7,8-tetrahydrofolyl-(gamma-L-Glu)(n) + L-glutamate + ATP = (6S)-5,6,7,8-tetrahydrofolyl-(gamma-L-Glu)(n+1) + ADP + phosphate + H(+). The protein operates within cofactor biosynthesis; tetrahydrofolylpolyglutamate biosynthesis. In terms of biological role, catalyzes conversion of folates to polyglutamate derivatives allowing concentration of folate compounds in the cell and the intracellular retention of these cofactors, which are important substrates for most of the folate-dependent enzymes that are involved in one-carbon transfer reactions involved in purine, pyrimidine and amino acid synthesis. This is Probable folylpolyglutamate synthase (met7) from Schizosaccharomyces pombe (strain 972 / ATCC 24843) (Fission yeast).